The primary structure comprises 296 residues: Dof zinc finger protein DOF3.7 (296 aa).

A disordered region spans residues 41–69 (NTRPNATASNGGSGGNTNNTATMETRKAR). Over residues 45-62 (NATASNGGSGGNTNNTAT) the composition is skewed to low complexity. The Dof-type zinc finger occupies 74-128 (VNCPRCNSTNTKFCYYNNYSLTQPRYFCKGCRRYWTEGGSLRNVPVGGSSRKNKR). The Zn(2+) site is built by cysteine 76, cysteine 79, cysteine 101, and cysteine 104. Positions 115 to 146 (RNVPVGGSSRKNKRSSTPLASPSNPKLPDLNP) are disordered. The segment covering 129-138 (SSTPLASPSN) has biased composition (polar residues).

In terms of tissue distribution, expressed in the phloem of the mother plant, including in roots, stem, leaves and flowers, but not present in the seed and embryo. In maturing siliques, found all through the funiculus connecting the placenta to the ovule, but not in the ovule.

The protein resides in the nucleus. Transcription factor specifically involved in the maternal control of seed germination. Regulates transcription by binding to a 5'-AA[AG]G-3' consensus core sequence. May ensure the inactivity of a component that would be activated to trigger germination as a consequence of red light perception. The chain is Dof zinc finger protein DOF3.7 (DOF3.7) from Arabidopsis thaliana (Mouse-ear cress).